Consider the following 616-residue polypeptide: Sodium- and chloride-dependent transporter XTRP3 (616 aa).

Over residues M1–R11 the composition is skewed to basic residues. The tract at residues M1 to E26 is disordered. Topologically, residues M1 to Q37 are cytoplasmic. A compositionally biased stretch (basic and acidic residues) spans G16–E26. Residues F38 to L58 traverse the membrane as a helical segment. The Extracellular segment spans residues C59–S66. A helical transmembrane segment spans residues F67–L87. Over A88–T103 the chain is Cytoplasmic. Residues I104–M124 traverse the membrane as a helical segment. Topologically, residues Y125–G189 are extracellular. N155 carries an N-linked (GlcNAc...) asparagine glycan. Residues V190–L210 form a helical membrane-spanning segment. Topologically, residues R211 to K218 are cytoplasmic. The helical transmembrane segment at V219–L239 threads the bilayer. The Extracellular portion of the chain corresponds to T240–W265. A helical membrane pass occupies residues I266–F286. Over A287 to A300 the chain is Cytoplasmic. Residues V301–I321 traverse the membrane as a helical segment. Topologically, residues Y322 to Q413 are extracellular. An N-linked (GlcNAc...) asparagine glycan is attached at N381. Residues L414–N434 form a helical membrane-spanning segment. The Cytoplasmic portion of the chain corresponds to T435–E455. Residues A456–A476 form a helical membrane-spanning segment. At G477–A489 the chain is on the extracellular side. Residues T490–L510 form a helical membrane-spanning segment. The Cytoplasmic portion of the chain corresponds to R511 to W533. Residues A534 to L554 form a helical membrane-spanning segment. Residues T555–H578 lie on the Extracellular side of the membrane. The chain crosses the membrane as a helical span at residues A579–L599. Residues G600 to A616 lie on the Cytoplasmic side of the membrane.

Belongs to the sodium:neurotransmitter symporter (SNF) (TC 2.A.22) family. SLC6A20 subfamily. Highly expressed in epithelial cells of duodenum, jejunum, ileum, stomach, cecum, colon and kidney proximal tubule. Also expressed in the choroid plexus, microglia and meniges of the brain and in the ovary.

The protein localises to the apical cell membrane. It carries out the reaction L-proline(out) + chloride(out) + 2 Na(+)(out) = L-proline(in) + chloride(in) + 2 Na(+)(in). The catalysed reaction is 4-hydroxy-L-proline(out) + chloride(out) + 2 Na(+)(out) = 4-hydroxy-L-proline(in) + chloride(in) + 2 Na(+)(in). It catalyses the reaction 2-methyl-2-(methylamino)propanoate(out) + chloride(out) + 2 Na(+)(out) = 2-methyl-2-(methylamino)propanoate(in) + chloride(in) + 2 Na(+)(in). The enzyme catalyses L-pipecolate(out) + chloride(out) + 2 Na(+)(out) = L-pipecolate(in) + chloride(in) + 2 Na(+)(in). It carries out the reaction glycine betaine(out) + chloride(out) + 2 Na(+)(out) = glycine betaine(in) + chloride(in) + 2 Na(+)(in). The catalysed reaction is glycine(out) + chloride(out) + 2 Na(+)(out) = glycine(in) + chloride(in) + 2 Na(+)(in). In terms of biological role, mediates the Na(+)- and Cl(-)-dependent uptake of imino acids such as L-proline, N-methyl-L-proline and pipecolate as well as N-methylated amino acids. Also transports glycine, regulates proline and glycine homeostasis in the brain playing a role in the modulation of NMDAR currents. The sequence is that of Sodium- and chloride-dependent transporter XTRP3 from Rattus norvegicus (Rat).